The following is a 447-amino-acid chain: N-succinylarginine dihydrolase (447 aa).

Residues 19–28 (AGLSFGNEAS), asparagine 110, and 137–138 (HR) contribute to the substrate site. Residue glutamate 174 is part of the active site. Residue arginine 212 coordinates substrate. Residue histidine 248 is part of the active site. The substrate site is built by aspartate 250 and asparagine 359. Catalysis depends on cysteine 365, which acts as the Nucleophile.

Belongs to the succinylarginine dihydrolase family. In terms of assembly, homodimer.

It catalyses the reaction N(2)-succinyl-L-arginine + 2 H2O + 2 H(+) = N(2)-succinyl-L-ornithine + 2 NH4(+) + CO2. The protein operates within amino-acid degradation; L-arginine degradation via AST pathway; L-glutamate and succinate from L-arginine: step 2/5. Its function is as follows. Catalyzes the hydrolysis of N(2)-succinylarginine into N(2)-succinylornithine, ammonia and CO(2). This chain is N-succinylarginine dihydrolase, found in Escherichia coli (strain SE11).